A 680-amino-acid polypeptide reads, in one-letter code: DNA-directed RNA polymerase subunit beta' (680 aa).

Zn(2+) contacts are provided by C69, C71, C87, and C90. Mg(2+) is bound by residues D489, D491, and D493.

Belongs to the RNA polymerase beta' chain family. RpoC1 subfamily. In terms of assembly, in plastids the minimal PEP RNA polymerase catalytic core is composed of four subunits: alpha, beta, beta', and beta''. When a (nuclear-encoded) sigma factor is associated with the core the holoenzyme is formed, which can initiate transcription. Mg(2+) is required as a cofactor. The cofactor is Zn(2+).

It localises to the plastid. The protein localises to the chloroplast. It catalyses the reaction RNA(n) + a ribonucleoside 5'-triphosphate = RNA(n+1) + diphosphate. DNA-dependent RNA polymerase catalyzes the transcription of DNA into RNA using the four ribonucleoside triphosphates as substrates. The protein is DNA-directed RNA polymerase subunit beta' of Amborella trichopoda.